Reading from the N-terminus, the 633-residue chain is Threonine--tRNA ligase (633 aa).

The 61-residue stretch at 1 to 61 (MINIYFNNNL…TENCTFEVIT (61 aa)) folds into the TGS domain. The interval 242 to 533 (DHRKIGKELE…LIEHHSGKFP (292 aa)) is catalytic. Positions 333, 384, and 510 each coordinate Zn(2+).

The protein belongs to the class-II aminoacyl-tRNA synthetase family. Homodimer. Zn(2+) serves as cofactor.

The protein resides in the cytoplasm. It catalyses the reaction tRNA(Thr) + L-threonine + ATP = L-threonyl-tRNA(Thr) + AMP + diphosphate + H(+). In terms of biological role, catalyzes the attachment of threonine to tRNA(Thr) in a two-step reaction: L-threonine is first activated by ATP to form Thr-AMP and then transferred to the acceptor end of tRNA(Thr). Also edits incorrectly charged L-seryl-tRNA(Thr). The protein is Threonine--tRNA ligase of Ehrlichia canis (strain Jake).